Reading from the N-terminus, the 156-residue chain is Small ribosomal subunit protein uS7 (156 aa).

Belongs to the universal ribosomal protein uS7 family. As to quaternary structure, part of the 30S ribosomal subunit. Contacts proteins S9 and S11.

Functionally, one of the primary rRNA binding proteins, it binds directly to 16S rRNA where it nucleates assembly of the head domain of the 30S subunit. Is located at the subunit interface close to the decoding center, probably blocks exit of the E-site tRNA. This chain is Small ribosomal subunit protein uS7, found in Buchnera aphidicola subsp. Acyrthosiphon pisum (strain Tuc7).